The primary structure comprises 160 residues: Large ribosomal subunit protein eL21 (160 aa).

This sequence belongs to the eukaryotic ribosomal protein eL21 family.

The polypeptide is Large ribosomal subunit protein eL21 (rpl21) (Dictyostelium discoideum (Social amoeba)).